The sequence spans 505 residues: N-succinylglutamate 5-semialdehyde dehydrogenase (505 aa).

234–239 (GSAHTG) contacts NAD(+). Active-site residues include Glu257 and Cys291.

The protein belongs to the aldehyde dehydrogenase family. AstD subfamily.

It carries out the reaction N-succinyl-L-glutamate 5-semialdehyde + NAD(+) + H2O = N-succinyl-L-glutamate + NADH + 2 H(+). It functions in the pathway amino-acid degradation; L-arginine degradation via AST pathway; L-glutamate and succinate from L-arginine: step 4/5. In terms of biological role, catalyzes the NAD-dependent reduction of succinylglutamate semialdehyde into succinylglutamate. This chain is N-succinylglutamate 5-semialdehyde dehydrogenase, found in Yersinia pseudotuberculosis serotype IB (strain PB1/+).